We begin with the raw amino-acid sequence, 116 residues long: Calcium-regulated OB-fold protein CarO (116 aa).

An N-terminal signal peptide occupies residues 1–21 (MKLRHLPLIAAIGLFSTVTLA).

The protein localises to the periplasm. Its function is as follows. Plays a role in intracellular Ca(2+) homeostasis. Involved in cell protection against oxidative stress in strain 25W. The sequence is that of Calcium-regulated OB-fold protein CarO from Pseudomonas aeruginosa (strain ATCC 15692 / DSM 22644 / CIP 104116 / JCM 14847 / LMG 12228 / 1C / PRS 101 / PAO1).